Here is a 340-residue protein sequence, read N- to C-terminus: MYRNWRDLISPKKLQVESESLTNTYGKFFAEPFERGFGTTLGNSLRRVLLSSLQGAAISSVKIKGVLHEFSSIPGVTEDVTNIILNLKGVSLKMHGNEARTVRIIHKGDGIVKAGDIVTDANVEILNPDHHIATCSKDANLEMEMVVKLGKGYVPSDRNRDEKAPVGTMPIDAIFSPIKKVNFTVSNARVGQMTDYDKLTLEVWTNGSVVPEDAVAFAAKILKEQLSIFINFDEEAEPAEEAETEEERERVNENLYRSVDELELSVRSANCLKNAGIKMIGELVSRSEAEMLKTQNFGRKSLNEIKDILADMGLTLGMKLDGFPDPEVMRRIRGERKDEE.

The interval 1-233 (MYRNWRDLIS…EQLSIFINFD (233 aa)) is alpha N-terminal domain (alpha-NTD). Positions 251–340 (VNENLYRSVD…RIRGERKDEE (90 aa)) are alpha C-terminal domain (alpha-CTD).

It belongs to the RNA polymerase alpha chain family. Homodimer. The RNAP catalytic core consists of 2 alpha, 1 beta, 1 beta' and 1 omega subunit. When a sigma factor is associated with the core the holoenzyme is formed, which can initiate transcription.

The catalysed reaction is RNA(n) + a ribonucleoside 5'-triphosphate = RNA(n+1) + diphosphate. In terms of biological role, DNA-dependent RNA polymerase catalyzes the transcription of DNA into RNA using the four ribonucleoside triphosphates as substrates. This is DNA-directed RNA polymerase subunit alpha from Geobacter metallireducens (strain ATCC 53774 / DSM 7210 / GS-15).